The following is a 648-amino-acid chain: Mitotic interactor and substrate of PLK1 (648 aa).

A Phosphoserine; by CDK1 modification is found at Ser77. 2 positions are modified to phosphothreonine: Thr149 and Thr190. Ser220 carries the phosphoserine modification. Disordered stretches follow at residues 242-383 (VNDP…PEAR) and 430-460 (KATE…GKAT). Phosphoserine; by CDK1 is present on Ser253. The segment covering 255-281 (ETPKETPIEREIRLAQEREAELREQRG) has biased composition (basic and acidic residues). Residue Thr256 is modified to Phosphothreonine; by CDK1. Phosphoserine is present on Ser318. The segment covering 325-339 (MVQETQREEDHRREG) has biased composition (basic and acidic residues). Position 347 is a phosphothreonine; by CDK1 (Thr347). A compositionally biased stretch (polar residues) spans 349–367 (DWPSQDPQPGLQRSLSSDC). Residues Ser352 and Ser364 each carry the phosphoserine modification. A phosphoserine; by PLK1 mark is found at Ser365 and Ser439. Residues 440 to 450 (ESSGRSLSSKQ) are compositionally biased toward polar residues. Phosphoserine is present on residues Ser507 and Ser509. Residues 511 to 534 (DLLEREMESVLRREREVAEERRNA) adopt a coiled-coil conformation. Positions 539 to 568 (VFSPVPAEDESHEQDSRSSSRASGITGSYS) are disordered. A Phosphoserine; by CDK1 modification is found at Ser541. At Ser554 the chain carries Phosphoserine; by PLK1. A compositionally biased stretch (polar residues) spans 557-568 (SSRASGITGSYS). Ser644 is modified (phosphoserine).

This sequence belongs to the MISP family. As to quaternary structure, associates with F-actin. Interacts with DCTN1; this interaction regulates DCTN1 distribution at the cell cortex. Interacts with PTK2/FAK and MAPRE1. In terms of processing, phosphorylated by CDK1 and PLK1. CDK1 is the priming kinase for PLK1 phosphorylation. Phosphorylation by PLK1 is required for proper spindle orientation at metaphase.

The protein localises to the cell junction. The protein resides in the focal adhesion. It is found in the cytoplasm. Its subcellular location is the cytoskeleton. It localises to the cell cortex. Its function is as follows. Plays a role in mitotic spindle orientation and mitotic progression. Regulates the distribution of dynactin at the cell cortex in a PLK1-dependent manner, thus stabilizing cortical and astral microtubule attachments required for proper mitotic spindle positioning. May link microtubules to the actin cytoskeleton and focal adhesions. May be required for directed cell migration and centrosome orientation. May also be necessary for proper stacking of the Golgi apparatus. In Mus musculus (Mouse), this protein is Mitotic interactor and substrate of PLK1.